We begin with the raw amino-acid sequence, 945 residues long: Chaperone protein ClpD, chloroplastic (945 aa).

The transit peptide at 1-89 (MEVLSTSSPL…FERFTERAIR (89 aa)) directs the protein to the chloroplast. Repeat regions lie at residues 90–146 (AIIF…WDEA) and 168–233 (FSIS…LKGE). Residues 90–233 (AIIFSQKEAK…AAALTRLKGE (144 aa)) enclose the Clp R domain. The interval 233–264 (EIAKDGREPSSSSKGSFESPPSGRIAGSGPGG) is disordered. Over residues 241–255 (PSSSSKGSFESPPSG) the composition is skewed to low complexity. The i stretch occupies residues 271 to 523 (LEQFCVDLTA…RARIEAFRKK (253 aa)). 316–323 (GEAGVGKT) contributes to the ATP binding site. A disordered region spans residues 555–586 (SRQKQDDGDAISDESGELVEESSLPPAAGDDE). Positions 562–574 (GDAISDESGELVE) are enriched in acidic residues. Residues 590–781 (VGPDDIAAVA…LIIMTSNVGS (192 aa)) form an II region. Residue 664–671 (GPTGVGKT) coordinates ATP.

It belongs to the ClpA/ClpB family. ClpD subfamily. In terms of assembly, homodimer and homohexamer. Hexamerization upon addition of ATP. Interacts with CLPT1. Stably associated with the import machinery. Mg(2+) is required as a cofactor. Expressed in stems and leaves.

Its subcellular location is the plastid. It is found in the chloroplast stroma. It catalyses the reaction ATP + H2O = ADP + phosphate + H(+). Molecular chaperone that interact with a ClpP-like protease involved in degradation of denatured proteins in the chloroplast. The ATPase activity of CLPD is stimulated by CLPT1. Has no ADPase activity. Interacts with transit peptides with a positional preference. Localization of the signal sequence at the N-terminal end of a protein seems mandatory for interaction to take place. The polypeptide is Chaperone protein ClpD, chloroplastic (Arabidopsis thaliana (Mouse-ear cress)).